The primary structure comprises 376 residues: MSASIPETMKAVVIENGKAVVKQDIPIPELEEGFVLIKTVAVAGNPTDWKHIDFKIGPQGALLGCDAAGQIVKLGPNVDAARFAIGDYIYGVIHGASVRFPSNGAFAEYSAISSETAYKPAREFRLCGKDKLPEGPVKSLEGAVSLPVSLTTAGMILTHSFGLDMTWKPSKAQRDQPILFWGGATAVGQMLIQLAKKLNGFSKIIVVASRKHEKLLKEYGADELFDYHDADVIEQIKKKYNNIPYLVDCVSNTETIQQVYKCAADDLDATVVQLTVLTEKDIKEEDRRQNVSIEGTLLYLIGGNDVPFGTFTLPADPEYKEAAIKFIKFINPKINDGEIHHIPVKVYKNGLDDIPQLLDDIKHGRNSGEKLVAVLK.

This sequence belongs to the YCR102c/YLR460c/YNL134c family.

This is an uncharacterized protein from Saccharomyces cerevisiae (strain ATCC 204508 / S288c) (Baker's yeast).